The sequence spans 311 residues: Urease accessory protein UreD (311 aa).

This sequence belongs to the UreD family. UreD, UreF and UreG form a complex that acts as a GTP-hydrolysis-dependent molecular chaperone, activating the urease apoprotein by helping to assemble the nickel containing metallocenter of UreC. The UreE protein probably delivers the nickel.

It is found in the cytoplasm. In terms of biological role, required for maturation of urease via the functional incorporation of the urease nickel metallocenter. This is Urease accessory protein UreD from Synechococcus sp. (strain CC9902).